The chain runs to 725 residues: Ribonuclease R (725 aa).

The region spanning 264 to 592 is the RNB domain; it reads RQDLTDLAFV…IHRLLWMHLF (329 aa). The S1 motif domain maps to 644-725; it reads GKTFSGFISA…IQKRAILTLI (82 aa).

This sequence belongs to the RNR ribonuclease family. RNase R subfamily.

The protein resides in the cytoplasm. The enzyme catalyses Exonucleolytic cleavage in the 3'- to 5'-direction to yield nucleoside 5'-phosphates.. In terms of biological role, 3'-5' exoribonuclease that releases 5'-nucleoside monophosphates and is involved in maturation of structured RNAs. This is Ribonuclease R from Mycoplasma genitalium (strain ATCC 33530 / DSM 19775 / NCTC 10195 / G37) (Mycoplasmoides genitalium).